Reading from the N-terminus, the 535-residue chain is T-complex protein 1 subunit zeta (535 aa).

Belongs to the TCP-1 chaperonin family. Heterooligomeric complex of about 850 to 900 kDa that forms two stacked rings, 12 to 16 nm in diameter.

The protein resides in the cytoplasm. Functionally, molecular chaperone; assists the folding of proteins upon ATP hydrolysis. Known to play a role, in vitro, in the folding of actin and tubulin. The polypeptide is T-complex protein 1 subunit zeta (cct6) (Schizosaccharomyces pombe (strain 972 / ATCC 24843) (Fission yeast)).